The chain runs to 108 residues: MKNFDKFSTNEEFSSVYKVGKKWHCEGVIIFYLNSYEKKIAVVASKKVGKAVVRNRSKRILRALFAKFERYLQDGKYIFVAKNEITELSFSRLEKNLKWGLKKLECFK.

Belongs to the RnpA family. Consists of a catalytic RNA component (M1 or rnpB) and a protein subunit.

It catalyses the reaction Endonucleolytic cleavage of RNA, removing 5'-extranucleotides from tRNA precursor.. Its function is as follows. RNaseP catalyzes the removal of the 5'-leader sequence from pre-tRNA to produce the mature 5'-terminus. It can also cleave other RNA substrates such as 4.5S RNA. The protein component plays an auxiliary but essential role in vivo by binding to the 5'-leader sequence and broadening the substrate specificity of the ribozyme. This chain is Ribonuclease P protein component, found in Campylobacter jejuni subsp. doylei (strain ATCC BAA-1458 / RM4099 / 269.97).